Consider the following 246-residue polypeptide: tRNA (guanine-N(1)-)-methyltransferase (246 aa).

S-adenosyl-L-methionine contacts are provided by residues glycine 114 and 134–139 (IGDYIL). The segment covering 219–231 (LRRPDLWERHEGA) has biased composition (basic and acidic residues). A disordered region spans residues 219 to 246 (LRRPDLWERHEGARAQSPSGARRQKKER).

It belongs to the RNA methyltransferase TrmD family. As to quaternary structure, homodimer.

The protein resides in the cytoplasm. The enzyme catalyses guanosine(37) in tRNA + S-adenosyl-L-methionine = N(1)-methylguanosine(37) in tRNA + S-adenosyl-L-homocysteine + H(+). Its function is as follows. Specifically methylates guanosine-37 in various tRNAs. The chain is tRNA (guanine-N(1)-)-methyltransferase from Rhizorhabdus wittichii (strain DSM 6014 / CCUG 31198 / JCM 15750 / NBRC 105917 / EY 4224 / RW1) (Sphingomonas wittichii).